The following is a 479-amino-acid chain: Ubiquinone biosynthesis monooxygenase COQ6, mitochondrial (479 aa).

It belongs to the UbiH/COQ6 family. In terms of assembly, component of a multi-subunit COQ enzyme complex, composed of at least COQ3, COQ4, COQ5, COQ6, COQ7 and COQ9. The cofactor is FAD.

It localises to the mitochondrion inner membrane. The enzyme catalyses 4-hydroxy-3-(all-trans-decaprenyl)benzoate + 2 reduced [2Fe-2S]-[ferredoxin] + O2 + 2 H(+) = 3,4-dihydroxy-5-(all-trans-decaprenyl)benzoate + 2 oxidized [2Fe-2S]-[ferredoxin] + H2O. The catalysed reaction is 2-methoxy-6-(all-trans-decaprenyl)phenol + 2 reduced [2Fe-2S]-[ferredoxin] + O2 + 2 H(+) = 2-methoxy-6-(all-trans-decaprenyl)benzene-1,4-diol + 2 oxidized [2Fe-2S]-[ferredoxin] + H2O. The protein operates within cofactor biosynthesis; ubiquinone biosynthesis. Functionally, FAD-dependent monooxygenase required for two non-consecutive steps during ubiquinone biosynthesis. Required for the C5-ring hydroxylation during ubiquinone biosynthesis by catalyzing the hydroxylation of 4-hydroxy-3-(all-trans-decaprenyl)benzoic acid to 3,4-dihydroxy-5-(all-trans-decaprenyl)benzoic acid. Also acts downstream of COQ4, for the C1-hydroxylation during ubiquinone biosynthesis by catalyzing the hydroxylation of 2-methoxy-6-(all-trans-decaprenyl)phenol to 2-methoxy-6-(all-trans-decaprenyl)benzene-1,4-diol. The electrons required for the hydroxylation reaction are funneled indirectly to coq6 from NADPH via a ferredoxin/ferredoxin reductase system. This Schizosaccharomyces pombe (strain 972 / ATCC 24843) (Fission yeast) protein is Ubiquinone biosynthesis monooxygenase COQ6, mitochondrial.